The primary structure comprises 314 residues: Acetaldehyde dehydrogenase 1/2 (314 aa).

Residue serine 12 to isoleucine 15 participates in NAD(+) binding. Cysteine 130 functions as the Acyl-thioester intermediate in the catalytic mechanism. Residues serine 161–asparagine 169 and asparagine 288 each bind NAD(+).

Belongs to the acetaldehyde dehydrogenase family.

It carries out the reaction acetaldehyde + NAD(+) + CoA = acetyl-CoA + NADH + H(+). The polypeptide is Acetaldehyde dehydrogenase 1/2 (Rhizorhabdus wittichii (strain DSM 6014 / CCUG 31198 / JCM 15750 / NBRC 105917 / EY 4224 / RW1) (Sphingomonas wittichii)).